The sequence spans 248 residues: MSEQKVALVTGALGGIGSEICRQLVTAGYKIIATVVPREEDREKQWLQSEGFQDSDVRFVLTDLNNHEAATAAIQEAIAAEGRVDVLVNNAGITRDATFKKMSYEQWSQVIDTNLKTLFTVTQPVFNKMLEQKSGRIVNISSVNGLKGQFGQANYSASKAGIIGFTKALAQEGARSNICVNVVAPGYTATPMVTAMREDVIKSIEAQIPLQRLAAPAEIAAAVMYLVSEHGAYVTGETLSINGGLYMH.

Residues 14–16, Arg42, and 90–94 contribute to the NADP(+) site; these read GGI and NAGIT. Substrate contacts are provided by residues Asp96 and 149 to 152; that span reads QFGQ. Catalysis depends on Tyr155, which acts as the Proton acceptor. 185 to 188 contributes to the NADP(+) binding site; that stretch reads PGYT. Residues 186-187 and Arg197 each bind substrate; that span reads GY.

The protein belongs to the short-chain dehydrogenases/reductases (SDR) family.

It is found in the cytoplasm. The catalysed reaction is a (3R)-3-hydroxyacyl-CoA + NADP(+) = a 3-oxoacyl-CoA + NADPH + H(+). The protein operates within biopolymer metabolism; poly-(R)-3-hydroxybutanoate biosynthesis. This chain is Acetoacetyl-CoA reductase (phaB), found in Acinetobacter sp. (strain RA3849).